Consider the following 397-residue polypeptide: Metallophosphoesterase 1 (397 aa).

A helical membrane pass occupies residues 27–47; the sequence is IAVVFAVLLFCEFLIYYLAIF. Residues Asp77, Asp119, Asn157, His250, His304, and His306 each contribute to the a divalent metal cation site. Residues 357–377 traverse the membrane as a helical segment; the sequence is VVLIIYCGMVGFLVVLTLTHF. Positions 393-397 match the Di-lysine motif motif; sequence KRKTR.

Belongs to the metallophosphoesterase superfamily. MPPE1 family. In terms of assembly, interacts with GPI-anchor proteins (via the GPI portion). Interacts with TMED10. The cofactor is Mn(2+).

The protein resides in the endoplasmic reticulum-Golgi intermediate compartment membrane. Metallophosphoesterase that catalyzes the removal of a side-chain ethanolamine-phosphate (EtNP) from the second mannose of the GPI-anchor protein intermediate. Participates in the glycan remodeling steps of GPI-anchor maturation to allow an efficient transport of GPI-anchor proteins from the endoplasmic reticulum to the Golgi. The protein is Metallophosphoesterase 1 of Pongo abelii (Sumatran orangutan).